The sequence spans 155 residues: Cyanate hydratase (155 aa).

Residues arginine 95, glutamate 98, and serine 121 contribute to the active site.

Belongs to the cyanase family.

The catalysed reaction is cyanate + hydrogencarbonate + 3 H(+) = NH4(+) + 2 CO2. Functionally, catalyzes the reaction of cyanate with bicarbonate to produce ammonia and carbon dioxide. This chain is Cyanate hydratase, found in Pseudomonas savastanoi pv. phaseolicola (strain 1448A / Race 6) (Pseudomonas syringae pv. phaseolicola (strain 1448A / Race 6)).